The following is a 150-amino-acid chain: Ribosome maturation factor RimP (150 aa).

The protein belongs to the RimP family.

The protein resides in the cytoplasm. Required for maturation of 30S ribosomal subunits. The chain is Ribosome maturation factor RimP from Francisella tularensis subsp. mediasiatica (strain FSC147).